We begin with the raw amino-acid sequence, 300 residues long: Urease accessory protein UreD (300 aa).

The protein belongs to the UreD family. In terms of assembly, ureD, UreF and UreG form a complex that acts as a GTP-hydrolysis-dependent molecular chaperone, activating the urease apoprotein by helping to assemble the nickel containing metallocenter of UreC. The UreE protein probably delivers the nickel.

It localises to the cytoplasm. In terms of biological role, required for maturation of urease via the functional incorporation of the urease nickel metallocenter. The polypeptide is Urease accessory protein UreD (Prochlorococcus marinus (strain MIT 9312)).